Here is a 164-residue protein sequence, read N- to C-terminus: Protein phosphatase 1 regulatory subunit 14C (164 aa).

Positions 1-19 (MSVVTGGGEAAGGGGGGGA) are enriched in gly residues. Residues 1 to 70 (MSVVTGGGEA…QQQRRHQQGK (70 aa)) are disordered. S2 carries the post-translational modification N-acetylserine. S25 carries the phosphoserine modification. R27 carries the omega-N-methylarginine modification. S33 carries the post-translational modification Phosphoserine. Low complexity predominate over residues 50-62 (VTTVAAAGQVQQQ). Residue T72 is modified to Phosphothreonine; by ILK1.

The protein belongs to the PP1 inhibitor family. In terms of processing, the main inhibitory site appears to be Thr-72. Has over 600-fold higher inhibitory activity when phosphorylated, creating a molecular switch for regulating the phosphorylation status of PPP1CA substrates and smooth muscle contraction. As to expression, detected in heart, muscle, spinal cord, hippocampus, hypothalamus, thalamus, midbrain, brain stem, cerebellum, brain cortex and olfactory bulb.

The protein resides in the endomembrane system. Its function is as follows. Inhibitor of the PP1 regulatory subunit PPP1CA. The chain is Protein phosphatase 1 regulatory subunit 14C (Ppp1r14c) from Mus musculus (Mouse).